A 408-amino-acid chain; its full sequence is Arginine biosynthesis bifunctional protein ArgJ 1 (408 aa).

The substrate site is built by Thr154, Lys180, Thr191, Glu277, Asn403, and Ser408. Catalysis depends on Thr191, which acts as the Nucleophile.

It belongs to the ArgJ family. As to quaternary structure, heterotetramer of two alpha and two beta chains.

The protein resides in the cytoplasm. It catalyses the reaction N(2)-acetyl-L-ornithine + L-glutamate = N-acetyl-L-glutamate + L-ornithine. The enzyme catalyses L-glutamate + acetyl-CoA = N-acetyl-L-glutamate + CoA + H(+). Its pathway is amino-acid biosynthesis; L-arginine biosynthesis; L-ornithine and N-acetyl-L-glutamate from L-glutamate and N(2)-acetyl-L-ornithine (cyclic): step 1/1. It participates in amino-acid biosynthesis; L-arginine biosynthesis; N(2)-acetyl-L-ornithine from L-glutamate: step 1/4. Catalyzes two activities which are involved in the cyclic version of arginine biosynthesis: the synthesis of N-acetylglutamate from glutamate and acetyl-CoA as the acetyl donor, and of ornithine by transacetylation between N(2)-acetylornithine and glutamate. This is Arginine biosynthesis bifunctional protein ArgJ 1 from Clostridium acetobutylicum (strain ATCC 824 / DSM 792 / JCM 1419 / IAM 19013 / LMG 5710 / NBRC 13948 / NRRL B-527 / VKM B-1787 / 2291 / W).